The primary structure comprises 1082 residues: RE1-silencing transcription factor (1082 aa).

The tract at residues 32-117 (DLHELSKAEL…SLELSAVEPQ (86 aa)) is interaction with SIN3A. Residues 43–57 (APQLIMLANVALTGE) form an interaction with SIN3B region. The interval 140–413 (PVAEDKCRSS…KSKHPTCPSK (274 aa)) is interaction with ZFP90. A C2H2-type 1 zinc finger spans residues 154 to 176 (FRCKPCQYEAESEEQFVHHIRIH). The interval 196 to 207 (SGSSPAEEGEFS) is required for binding to the neuron-restrictive silencer element. 7 C2H2-type zinc fingers span residues 211 to 235 (IRCD…HHLR), 243 to 265 (YKCI…LRNH), 271 to 293 (YTCS…VRTH), 299 to 321 (YKCE…MRTH), 327 to 350 (FKCD…RQVH), 356 to 378 (LNCP…VELH), and 384 to 407 (FNCP…KSKH). Disordered stretches follow at residues 408 to 809 (PTCP…ELSL) and 831 to 1027 (SKLL…KAGL). Positions 440–475 (EKMENEQTKTKGDVSGKKNEKPVKAVGKDASKEKKP) are enriched in basic and acidic residues. Over residues 477–497 (SSVSVVQVTTRTRKSAVAAET) the composition is skewed to low complexity. A compositionally biased stretch (basic residues) spans 581-597 (KGTKKTPPKTKTSKKGG). The segment covering 630 to 640 (VTGSGSSQTEL) has biased composition (polar residues). 2 stretches are compositionally biased toward pro residues: residues 684–713 (YPQP…PAPP) and 729–751 (KEPP…PPPM). Basic and acidic residues-rich tracts occupy residues 798–807 (LRKDRAEKEL) and 854–864 (NSREETPKDQE). Polar residues predominate over residues 900–909 (RVSSSEQNSA). Residue Ser-950 is modified to Phosphoserine. An interaction with RCOR1 region spans residues 985 to 1063 (EGIHSHDGSD…HLNRHLVNVY (79 aa)). The C2H2-type 9 zinc-finger motif lies at 1036 to 1058 (FVCIFCDRSFRKEKDYSKHLNRH).

In terms of assembly, isoform 1 and isoform 2 form heterodimers. Isoform 2: Forms homodimers and homooligomers; binds to the neuron-restrictive silencer element (NRSE) as monomer. Interacts with SIN3A, SIN3B and RCOR1. Interacts with CDYL. Interacts with EHMT1 and EHMT2 only in the presence of CDYL. Part of a complex containing at least CDYL, REST, WIZ, SETB1, EHMT1 and EHMT2. Interacts (via zinc-finger DNA-binding domain) with ZFP90 (via N- and C-termini); the interaction inhibits REST repressor activity. Interacts (via C2H2-type zinc finger 5) with PRICKLE1. Interacts with FBXW11 and BTRC. Interacts with USP7. Post-translationally, O-glycosylated. In terms of processing, phosphorylated; phosphorylation is required for ubiquitination. Ubiquitinated; ubiquitination is mediated by BTRC and leads to proteasomal degradation in G2 phase. Ubiquitination increases during neuronal differentiation. Deubiquitinated by USP7; leading to its stabilization and promoting the maintenance of neural progenitor cells. Expressed in the hippocampus, including quiescent neuronal progenitor (QNP) cells, transient-amplifying progenitor (TAP) cells, neuroblasts and mature neurons (at protein level). Expressed in embryonic stem cells (at protein level). Expressed in many non-neuronal tissues including the heart and liver. Abundantly expressed in osteoblastic lineage cells. Expressed in the spleen, kidney, blood cells, cortex, neocortex and in the utricle, saccule and organ of Corti of the inner ear. Isoform 2: Expressed in the cortex, neocortex and in the utricle, saccule and organ of Corti of the inner ear.

The protein localises to the nucleus. It localises to the cytoplasm. Functionally, transcriptional repressor which binds neuron-restrictive silencer element (NRSE) and represses neuronal gene transcription in non-neuronal cells. Restricts the expression of neuronal genes by associating with two distinct corepressors, SIN3A and RCOR1, which in turn recruit histone deacetylase to the promoters of REST-regulated genes. Mediates repression by recruiting the BHC complex at RE1/NRSE sites which acts by deacetylating and demethylating specific sites on histones, thereby acting as a chromatin modifier. Transcriptional repression by REST-CDYL via the recruitment of histone methyltransferase EHMT2 may be important in transformation suppression. Represses the expression of SRRM4 in non-neural cells to prevent the activation of neural-specific splicing events and to prevent production of REST isoform 2. Repressor activity may be inhibited by forming heterodimers with isoform 2, thereby preventing binding to NRSE or binding to corepressors and leading to derepression of target genes. Also maintains repression of neuronal genes in neural stem cells, and allows transcription and differentiation into neurons by dissociation from RE1/NRSE sites of target genes. Thereby is involved in maintaining the quiescent state of adult neural stem cells and preventing premature differentiation into mature neurons. Plays a role in the developmental switch in synaptic NMDA receptor composition during postnatal development, by repressing GRIN2B expression and thereby altering NMDA receptor properties from containing primarily GRIN2B to primarily GRIN2A subunits. Acts as a regulator of osteoblast differentiation. Key repressor of gene expression in hypoxia; represses genes in hypoxia by direct binding to an RE1/NRSE site on their promoter regions. May also function in stress resistance in the brain during aging; possibly by regulating expression of genes involved in cell death and in the stress response. Repressor of gene expression in the hippocampus after ischemia by directly binding to RE1/NRSE sites and recruiting SIN3A and RCOR1 to promoters of target genes, thereby promoting changes in chromatin modifications and ischemia-induced cell death. After ischemia, might play a role in repression of miR-132 expression in hippocampal neurons, thereby leading to neuronal cell death. Its function is as follows. Binds to the 3' region of the neuron-restrictive silencer element (NRSE), with lower affinity than isoform 1. Exhibits weaker repressor activity compared to isoform 1. May negatively regulate the repressor activity of isoform 1 by binding to isoform 1, thereby preventing its binding to NRSE and leading to derepression of target genes. However, in another study, does not appear to be implicated in repressor activity of a NRSE motif-containing reporter construct nor in inhibitory activity on the isoform 1 transcriptional repressor activity. Post-transcriptional inactivation of REST by SRRM4-dependent alternative splicing into isoform 2 is required in mechanosensory hair cells in the inner ear for derepression of neuronal genes, maintenance of hair cells and hearing. This chain is RE1-silencing transcription factor (Rest), found in Mus musculus (Mouse).